The chain runs to 231 residues: Large ribosomal subunit protein uL1 (231 aa).

The protein belongs to the universal ribosomal protein uL1 family. Part of the 50S ribosomal subunit.

Binds directly to 23S rRNA. The L1 stalk is quite mobile in the ribosome, and is involved in E site tRNA release. In terms of biological role, protein L1 is also a translational repressor protein, it controls the translation of the L11 operon by binding to its mRNA. The polypeptide is Large ribosomal subunit protein uL1 (Ralstonia nicotianae (strain ATCC BAA-1114 / GMI1000) (Ralstonia solanacearum)).